The primary structure comprises 611 residues: Calmegin (611 aa).

The N-terminal stretch at 1 to 19 (MRFQGVGLCLGLLFITVNA) is a signal peptide. At 20 to 471 (DFMDDGVEVE…LVIAAEERPW (452 aa)) the chain is on the lumenal side. N6-acetyllysine is present on Lys-128. Cys-151 and Cys-185 are joined by a disulfide. Residues 254-335 (LDDVVPPINP…KAEKPEDWSD (82 aa)) are disordered. Over residues 265–284 (REIDDPSDKKPEEWDDRAKI) the composition is skewed to basic and acidic residues. Repeat copies occupy residues 267-280 (IDDP…EWDD), 284-297 (IPDP…DWDE), 303-316 (IEDS…GWLD), 322-335 (IPNP…DWSD), 339-352 (GEWE…PACQ), 356-369 (GEWK…PKYK), 370-383 (GIWR…PNYQ), and 384-397 (GLWS…PDYF). An interaction with PPIB region spans residues 317 to 350 (DEPKFIPNPKAEKPEDWSDDMDGEWEAPHIPNPA). Cys-351 and Cys-355 are disulfide-bonded. A helical membrane pass occupies residues 472–492 (LWLMYLVMAGLPVALVASFCW). The Cytoplasmic portion of the chain corresponds to 493–611 (PRKVKKKYED…SLRKRRVRKD (119 aa)). Positions 517 to 611 (AALEQEAEEE…SLRKRRVRKD (95 aa)) are disordered. Over residues 526 to 584 (EKAPEKPEDVQEEKKPGEAEVVTVEKEVIGEPEEKSKEDRETLEGQEEVSKLSKSGSED) the composition is skewed to basic and acidic residues. Ser-561, Ser-578, Ser-580, Ser-582, Ser-592, Ser-595, and Ser-602 each carry phosphoserine. A compositionally biased stretch (basic residues) spans 602–611 (SLRKRRVRKD).

It belongs to the calreticulin family. As to quaternary structure, interacts with PDILT and PPIB. Interacts with ADAM2. Interacts with ADAM1A, ADAM1B and ADAM3; these are protein-coding genes in mouse but may be pseudogenes in other organisms. Detected in testis (at protein level). Detected in testis.

The protein localises to the endoplasmic reticulum membrane. In terms of biological role, functions during spermatogenesis as a chaperone for a range of client proteins that are important for sperm adhesion onto the egg zona pellucida and for subsequent penetration of the zona pellucida. Required for normal sperm migration from the uterus into the oviduct. Required for normal male fertility. Binds calcium ions. The chain is Calmegin (Clgn) from Mus musculus (Mouse).